Here is a 281-residue protein sequence, read N- to C-terminus: 2,3,4,5-tetrahydropyridine-2,6-dicarboxylate N-succinyltransferase (281 aa).

Substrate-binding residues include Arg108 and Asp145.

Belongs to the transferase hexapeptide repeat family. In terms of assembly, homotrimer.

It localises to the cytoplasm. It catalyses the reaction (S)-2,3,4,5-tetrahydrodipicolinate + succinyl-CoA + H2O = (S)-2-succinylamino-6-oxoheptanedioate + CoA. The protein operates within amino-acid biosynthesis; L-lysine biosynthesis via DAP pathway; LL-2,6-diaminopimelate from (S)-tetrahydrodipicolinate (succinylase route): step 1/3. The polypeptide is 2,3,4,5-tetrahydropyridine-2,6-dicarboxylate N-succinyltransferase (Rhodopseudomonas palustris (strain BisB5)).